The following is a 498-amino-acid chain: Lysine--tRNA ligase (498 aa).

Mg(2+) is bound by residues E408 and E415.

This sequence belongs to the class-II aminoacyl-tRNA synthetase family. Homodimer. Mg(2+) serves as cofactor.

It is found in the cytoplasm. It carries out the reaction tRNA(Lys) + L-lysine + ATP = L-lysyl-tRNA(Lys) + AMP + diphosphate. This chain is Lysine--tRNA ligase, found in Pediococcus pentosaceus (strain ATCC 25745 / CCUG 21536 / LMG 10740 / 183-1w).